We begin with the raw amino-acid sequence, 960 residues long: Importin alpha re-exporter (960 aa).

18 HEAT repeats span residues 1 to 33 (MSDL…LETQ), 34 to 73 (DGFG…VDEN), 74 to 120 (GNHL…FPDR), 121 to 157 (WPTL…WRPL), 158 to 220 (FRSD…NCQD), 221 to 278 (IPEF…TRYE), 279 to 323 (DVFG…TRIP), 324 to 392 (KYFE…KEKN), 393 to 445 (EVLV…GVSS), 446 to 489 (TNNL…RNQL), 490 to 528 (TKAQ…TIRE), 529 to 586 (SNTS…TSED), 587 to 630 (SIQP…LNYT), 631 to 674 (QRQN…QSAT), 675 to 716 (IPES…SSIF), 717 to 751 (PDLV…LLID), 752 to 794 (MNRL…NKLG), and 795 to 826 (SDFL…PTIG). Residues 23–96 (SERNLRQLET…KKEIVPLMIS (74 aa)) form the Importin N-terminal domain. The short motif at 366 to 381 (RRDLEGSDTDTRRRAC) is the Nuclear localization signal element. Residues 827–928 (NLLDRKIALI…RLYVAEALNK (102 aa)) form an HEAT 19; with insert repeat. One copy of the HEAT 20 repeat lies at 929–960 (YNAISGNTFLNTILPQLTQENQVKLNQLLVGN).

Belongs to the XPO2/CSE1 family. As to quaternary structure, binds with high affinity to SRP1 only in the presence of RanGTP. The complex is dissociated by the RanGTP-binding protein YRB1.

It localises to the cytoplasm. The protein resides in the nucleus. Export receptor for importin alpha (SRP1). Mediates importin-alpha re-export from the nucleus to the cytoplasm after import substrates have been released into the nucleoplasm. The chain is Importin alpha re-exporter (CSE1) from Saccharomyces cerevisiae (strain ATCC 204508 / S288c) (Baker's yeast).